The chain runs to 355 residues: Probable aldo-keto reductase 3 (355 aa).

Y70 functions as the Proton donor in the catalytic mechanism. H138 contacts substrate. 217 to 227 (SPLGRGFFSSG) is a binding site for NADP(+).

This sequence belongs to the aldo/keto reductase family.

This Oryza sativa subsp. japonica (Rice) protein is Probable aldo-keto reductase 3.